Consider the following 710-residue polypeptide: DNA polymerase epsilon subunit B (710 aa).

The disordered stretch occupies residues 116 to 167 (FLKRPNSPTDTEITTLSQGSATSVVNPDSHSPMMLEEGSPINSDSEPISEHE). Over residues 121 to 144 (NSPTDTEITTLSQGSATSVVNPDS) the composition is skewed to polar residues.

The protein belongs to the DNA polymerase epsilon subunit B family. Heterotetramer. Consists of four subunits: POL2, DPB2, DPB3 and DPB4.

The protein localises to the nucleus. In terms of biological role, as accessory component of the DNA polymerase epsilon (DNA polymerase II) participates in chromosomal DNA replication. The protein is DNA polymerase epsilon subunit B (DPB2) of Kluyveromyces lactis (strain ATCC 8585 / CBS 2359 / DSM 70799 / NBRC 1267 / NRRL Y-1140 / WM37) (Yeast).